Here is a 512-residue protein sequence, read N- to C-terminus: Retinaldehyde dehydrogenase 3 (512 aa).

The disordered stretch occupies residues 1 to 22; the sequence is MATANGAVENGQPDRKPPALPR. Position 2 is an N-acetylalanine (alanine 2). NAD(+) is bound by residues lysine 204, glutamate 207, and 257-262; that span reads GSTEVG. Glutamate 280 functions as the Proton acceptor in the catalytic mechanism. Residue cysteine 314 is the Nucleophile of the active site. Residues glutamine 361 and glutamate 411 each coordinate NAD(+).

Belongs to the aldehyde dehydrogenase family. As to quaternary structure, homotetramer. As to expression, expressed at low levels in many tissues and at higher levels in salivary gland, stomach, and kidney.

The protein localises to the cytoplasm. The enzyme catalyses all-trans-retinal + NAD(+) + H2O = all-trans-retinoate + NADH + 2 H(+). The catalysed reaction is retinal + NAD(+) + H2O = retinoate + NADH + 2 H(+). It carries out the reaction all-trans-13,14-dihydroretinal + NAD(+) + H2O = all-trans-13,14-dihydroretinoate + NADH + 2 H(+). It participates in cofactor metabolism; retinol metabolism. Catalyzes the NAD-dependent oxidation of aldehyde substrates, such as all-trans-retinal and all-trans-13,14-dihydroretinal, to their corresponding carboxylic acids, all-trans-retinoate and all-trans-13,14-dihydroretinoate, respectively. High specificity for all-trans-retinal as substrate, can also accept acetaldehyde as substrate in vitro but with lower affinity. Required for the biosynthesis of normal levels of retinoate in the embryonic ocular and nasal regions; a critical lipid in the embryonic development of the eye and the nasal region. This is Retinaldehyde dehydrogenase 3 (ALDH1A3) from Homo sapiens (Human).